The sequence spans 642 residues: Aryl hydrocarbon receptor nuclear translocator homolog (642 aa).

Residues 13-66 form the bHLH domain; the sequence is ASRENHCEIERRRRNKMTAYITELSDMVPTCSALARKPDKLTILRMAVAHMKAL. PAS domains follow at residues 85 to 156 and 271 to 341; these read DQEL…ESQN and TAAN…LKQK. One can recognise a PAC domain in the interval 346–389; it reads SLLYRARAKNSEYVWLRTQAYAFLNPYTDEVEYIVCTNSSGKTM. The interval 450 to 612 is disordered; the sequence is QAPTPQQQQQ…GPAGAGQPQG (163 aa). Polar residues-rich tracts occupy residues 463 to 482 and 528 to 554; these read RPGSAQTTPVGYTYDTTHSP and YQYQQTSPARSPSGPTYTQLSAGNGNR. A compositionally biased stretch (low complexity) spans 555-564; the sequence is QQAQPGAYQA.

As to quaternary structure, efficient DNA binding requires dimerization with another bHLH protein. Heterodimer with ahr, trh or sim. As to expression, at stage 11, expression is detected in tracheal pits. At later stages, strong expression is also detected in the CNS.

It is found in the nucleus. Heterodimers of tgo/trh are involved in the control of breathless expression. Plays a role in the cellular or tissue response to oxygen deprivation. The chain is Aryl hydrocarbon receptor nuclear translocator homolog (tgo) from Drosophila melanogaster (Fruit fly).